A 283-amino-acid chain; its full sequence is Putative ABC transporter ATP-binding protein MA_4342 (283 aa).

The region spanning 3–238 (IILENVSFFY…KNVPLPPVTS (236 aa)) is the ABC transporter domain. 40–47 (GEKGAGKS) contributes to the ATP binding site.

Belongs to the ABC transporter superfamily.

The protein localises to the cell membrane. Its function is as follows. Probably part of an ABC transporter complex. Responsible for energy coupling to the transport system. The protein is Putative ABC transporter ATP-binding protein MA_4342 of Methanosarcina acetivorans (strain ATCC 35395 / DSM 2834 / JCM 12185 / C2A).